An 884-amino-acid chain; its full sequence is Pyruvate, phosphate dikinase (884 aa).

The tract at residues 1-351 (MSTRRVYFFG…LWMLQARAGK (351 aa)) is N-terminal. R99 serves as a coordination point for ATP. Residues 352–408 (RTGFAMVRIAIDMCKEGMLTEEEALLRIDANKINEFLFKRFDPSVKPVVLGKGIPAS) are linker 1. Residues 409-507 (PGAAVGVICF…KFKEGDFISI (99 aa)) form a central region. Residue T462 is modified to Phosphothreonine; by PDRP1. The Tele-phosphohistidine intermediate role is filled by H464. A linker 2 region spans residues 508–542 (NGTTGEIYNGAVQTIEPGITDDLQTIMDWSDKYRV). The segment at 543 to 884 (LKIRTNADTP…IAAIKARTNQ (342 aa)) is C-terminal. Substrate-binding residues include R570, R626, E753, G774, T775, N776, and D777. E753 contacts Mg(2+). D777 contacts Mg(2+). C839 serves as the catalytic Proton donor.

The protein belongs to the PEP-utilizing enzyme family. In terms of assembly, homodimer. Requires Mg(2+) as cofactor. Phosphorylation of Thr-462 in the dark inactivates the enzyme. Dephosphorylation upon light stimulation reactivates the enzyme.

The enzyme catalyses pyruvate + phosphate + ATP = phosphoenolpyruvate + AMP + diphosphate + H(+). Activated by light-induced dephosphorylation. Inhibited by dark-induced phosphorylation. Both reactions are catalyzed by PDRP1. Functionally, catalyzes the reversible phosphorylation of pyruvate and phosphate. The protein is Pyruvate, phosphate dikinase of Giardia intestinalis (Giardia lamblia).